The sequence spans 901 residues: Protein translocase subunit SecA (901 aa).

Residues Q87, 105–109 (GEGKT), and D512 each bind ATP. Zn(2+) is bound by residues C885, C887, C896, and H897.

Belongs to the SecA family. In terms of assembly, monomer and homodimer. Part of the essential Sec protein translocation apparatus which comprises SecA, SecYEG and auxiliary proteins SecDF-YajC and YidC. Zn(2+) serves as cofactor.

The protein resides in the cell inner membrane. It localises to the cytoplasm. The catalysed reaction is ATP + H2O + cellular proteinSide 1 = ADP + phosphate + cellular proteinSide 2.. Functionally, part of the Sec protein translocase complex. Interacts with the SecYEG preprotein conducting channel. Has a central role in coupling the hydrolysis of ATP to the transfer of proteins into and across the cell membrane, serving both as a receptor for the preprotein-SecB complex and as an ATP-driven molecular motor driving the stepwise translocation of polypeptide chains across the membrane. The polypeptide is Protein translocase subunit SecA (Salmonella schwarzengrund (strain CVM19633)).